The primary structure comprises 138 residues: Cell division protein SepF (138 aa).

Belongs to the SepF family. In terms of assembly, homodimer. Interacts with FtsZ.

Its subcellular location is the cytoplasm. Cell division protein that is part of the divisome complex and is recruited early to the Z-ring. Probably stimulates Z-ring formation, perhaps through the cross-linking of FtsZ protofilaments. Its function overlaps with FtsA. This Limosilactobacillus reuteri (strain DSM 20016) (Lactobacillus reuteri) protein is Cell division protein SepF.